Reading from the N-terminus, the 65-residue chain is Large ribosomal subunit protein bL35 (65 aa).

It belongs to the bacterial ribosomal protein bL35 family.

This is Large ribosomal subunit protein bL35 from Thiobacillus denitrificans (strain ATCC 25259 / T1).